Reading from the N-terminus, the 740-residue chain is Glycerol dehydrogenase large subunit (740 aa).

Positions 1 to 29 (MRRPYLLATAAGLALACSPLIAHAQFAPA) are cleaved as a signal peptide. Disordered stretches follow at residues 28-105 (PAGA…GDWV) and 442-468 (LPVE…PWSV). Over residues 34–43 (EPSSSVPGPG) the composition is skewed to low complexity. Positions 46–58 (SEPTENSPKSQSY) are enriched in polar residues.

This sequence belongs to the bacterial PQQ dehydrogenase family. Pyrroloquinoline quinone is required as a cofactor.

Its subcellular location is the secreted. The catalysed reaction is glycerol + A = dihydroxyacetone + AH2. Catalyzes the oxidation of glycerol to glycerone. Also acts, more slowly, on a number of other polyols including D-sorbitol, D-arabinitol, D-mannitol, meso-erythritol, adonitol and propylene glycol. The sequence is that of Glycerol dehydrogenase large subunit (sldA) from Gluconobacter thailandicus.